The chain runs to 253 residues: FGFR1 oncogene partner 2 homolog (253 aa).

Residues Ile5 to Tyr104 are a coiled coil. Position 140 is a phosphoserine (Ser140). The stretch at Leu160–Glu223 forms a coiled coil. Positions Asp231 to Ser253 are disordered. Positions Glu235–Ser253 are enriched in polar residues.

Belongs to the SIKE family.

It localises to the cytoplasm. Its function is as follows. May be involved in wound healing pathway. The protein is FGFR1 oncogene partner 2 homolog (Fgfr1op2) of Mus musculus (Mouse).